The sequence spans 273 residues: Co-chaperone protein DjlA (273 aa).

At 1–6 (MHYWGK) the chain is on the periplasmic side. A helical membrane pass occupies residues 7 to 31 (LLGLIFGVVSGAGFWGIVIGLFIGH). Topologically, residues 32 to 273 (MLDRASVRGN…DLIKKEKGFK (242 aa)) are cytoplasmic. The 67-residue stretch at 207–273 (DACKVLGVRE…DLIKKEKGFK (67 aa)) folds into the J domain.

As to quaternary structure, homodimer.

It localises to the cell inner membrane. Its function is as follows. Regulatory DnaK co-chaperone. Direct interaction between DnaK and DjlA is needed for the induction of the wcaABCDE operon, involved in the synthesis of a colanic acid polysaccharide capsule, possibly through activation of the RcsB/RcsC phosphotransfer signaling pathway. The colanic acid capsule may help the bacterium survive conditions outside the host. In Photorhabdus laumondii subsp. laumondii (strain DSM 15139 / CIP 105565 / TT01) (Photorhabdus luminescens subsp. laumondii), this protein is Co-chaperone protein DjlA.